A 124-amino-acid chain; its full sequence is Small ribosomal subunit protein bS6 (124 aa).

The disordered stretch occupies residues 96 to 124 (ETGPSPMMKEVQREEAKKAAAAQPTEAQA). A compositionally biased stretch (low complexity) spans 114–124 (AAAAQPTEAQA).

Belongs to the bacterial ribosomal protein bS6 family.

Its function is as follows. Binds together with bS18 to 16S ribosomal RNA. The protein is Small ribosomal subunit protein bS6 of Burkholderia mallei (strain ATCC 23344).